The following is a 149-amino-acid chain: Down syndrome critical region protein 9 (149 aa).

Residues 1–41 (MGRICPVNSRARRLRARPGRPSGDSLPYHQLQGGAPRLWSP) form a disordered region.

Testis specific.

The chain is Down syndrome critical region protein 9 (DSCR9) from Homo sapiens (Human).